A 1493-amino-acid polypeptide reads, in one-letter code: MAELSEPEGPVDWKERCVALESQLMKFRVQASKIRELLAEKMQQLERQVIDAERQAEKAFQQVQVMEDKLKAANIQTSESETRLYNKCQDLESLIQEKDDVIQNLELQLEEQKQIRIQEAKIIEEKAAKIKEWVTVKLNELELENQNLRLINQNQTEEIRTMQSKLQEVQGKKSSTVSTLKLSEGQRLSSLTFGCFLSRARSPPQVVKSEEMSKISSKEPEFTEGKDMEEMEIPEKSVDNQVLENNRGQRTLHQTPCGSEQNRKTRTSFATDGGISQNSGAPVSDWSSDEEDGSKGRSKSRCTSTLSSHTSEEGVQCSRMGSEMYLTASDDSSSIFEEETFGIKRPEHKKLYSWQQEAQWKALNSPLGKGNSELSKKEQDSSSDELNKKFQSQRLDYSSSSSEANTPSPILTPALMPKHPNSLSGKGTQLVPSSHLPPPKLRIPNVFSISVALAKRHLSQPQLSSDRMFGTNRNAISMIRPLRPQETDLDLVDGDSTEVLENMDTSCDDGLFSYDSLDSPNSDDQEHCDSAKKVAYSKPPTPPLHRFPSWESRIYAVAKSGIRMSEAFNMESVNKNSAATLSYTTSGLYTSLIYKNMTTPVYTTLKGKATQISSSPFLDDSSGSEEEDSSRSSSRTSESDSRSRSGPGSPRAMKRGVSLSSVASESDYAIPPDAYSTDTEYSQPEQKLPKTCSSSSDNGKNEPLEKSGYLLKMSGKVKSWKRRWFVLKGGELLYYKSPSDVIRKPQGHIELSASCSILRGDNKQTVQLTTEKHTYYLTADSPNILEEWIKVLQNVLRVQAANPLSLQPEGKPTMKGLLTKVKHGYSKRVWCTLIGKTLYYFRSQEDKFPLGQIKLWEAKVEEVDRSCDSDEDYEASGRSLLSTHYTIVIHPKDQGPTYLLIGSKHEKDTWLYHLTVAAGSNNVNVGSEFEQLVCKLLNIDGEPSSQIWRHPTLCHSKEGIISPLTTLPSEALQTEAIKLFKTCQLFINAAVDSPAIDYHISLAQSALQICLTHPELQNEICCQLIKQTRRRQPQNQPGPLQGWQLLALCVGLFLPHHPFLWLLRLHLKRNADSRTEFGKYAIYCQRCVERTQQNGDREARPSRMEILSTLLRNPYHHSLPFSIPVHFMNGIYQVVGFDASTTVEEFLNTLNQDTGMRKPAQSGFALFTDDPSGRDLEHCLQGNIKICDIISKWEQASKEQQPGKCEGTRTVRLTYKNRLYFSVQARGETDREKLLLMYQTNDQIINGLFPLNKDLALEMAALLSQVEIGDFERPFSTPAGHVTNQCKVNQTLKQVIEKFYPKRYRDGCSEEQLRQLCQRLSTRWMALRGHSAADCVRIYLTVARKWPFFGAKLFLAKPITPSSLGSTFLWLAVHEDGLSLLEYNSMRLIVSYVYKSLMTFGGYQDDFMVVINNTHSKDKPTEKLLFAMAKPKILEITLLIASYINNFHQQKAAFHHLSAPALLSAQTRGPQARMMGSQPLLSSSRPTKGPTLL.

Positions 20-175 (LESQLMKFRV…LQEVQGKKSS (156 aa)) form a coiled coil. Disordered regions lie at residues 202–230 (SPPQ…DMEE), 245–335 (NNRG…SSSI), 363–439 (LNSP…LPPP), and 613–705 (SSSP…EPLE). Residues 208–230 (KSEEMSKISSKEPEFTEGKDMEE) are compositionally biased toward basic and acidic residues. Composition is skewed to polar residues over residues 245–260 (NNRG…CGSE) and 267–281 (TSFA…NSGA). Basic and acidic residues predominate over residues 374–388 (LSKKEQDSSSDELNK). 3 stretches are compositionally biased toward polar residues: residues 389-409 (KFQS…TPSP), 421-432 (NSLSGKGTQLVP), and 676-698 (STDT…SSDN). PH domains are found at residues 703 to 797 (PLEK…NVLR) and 811 to 919 (KPTM…VAAG). The 156-residue stretch at 955–1110 (HSKEGIISPL…PSRMEILSTL (156 aa)) folds into the MyTH4 domain. Residues 1121 to 1451 (FSIPVHFMNG…SYINNFHQQK (331 aa)) form the FERM domain. Positions 1474 to 1493 (MMGSQPLLSSSRPTKGPTLL) are disordered.

Self-associates. Interacts with TGFB1I1. As to expression, kidney. Reduced expression in patients with focal segmental glomerulosclerosis.

It localises to the cytoplasm. It is found in the cytoskeleton. Its subcellular location is the cell membrane. The protein localises to the cell projection. The protein resides in the lamellipodium. Its function is as follows. In the kidney glomerulus may play a role in linking podocyte foot processes to the glomerular basement membrane. May be involved in stabilization of F-actin by attenuating its depolymerization. Can recruit TGFB1I1 from focal adhesions to podocyte lamellipodia. The chain is Pleckstrin homology domain-containing family H member 2 (PLEKHH2) from Homo sapiens (Human).